Here is a 450-residue protein sequence, read N- to C-terminus: Regulator of sigma-E protease RseP (450 aa).

The chain crosses the membrane as a helical span at residues 1–21 (MLSFLWDLASFIVALGVLITV). H22 contributes to the Zn(2+) binding site. Over 22–103 (HEFGHFWVAR…VGQRAAIIAA (82 aa)) the chain is Periplasmic. The active site involves E23. A Zn(2+)-binding site is contributed by H26. A helical membrane pass occupies residues 104-124 (GPVANFIFAIFAYWLVFIIGV). The Cytoplasmic segment spans residues 125-375 (PGVRPVVGEI…KGAGMTAELG (251 aa)). 2 PDZ domains span residues 127–220 (VRPV…PRGP) and 222–309 (IEPV…PKVI). Residues 376–396 (VVYYLPFLALISVNLGIINLF) form a helical membrane-spanning segment. Topologically, residues 397 to 429 (PLPVLDGGHLLFLAIEKIKGGPVSERVQDFCYR) are periplasmic. A helical membrane pass occupies residues 430 to 450 (IGSILLVLLMGLALFNDFSRL).

Belongs to the peptidase M50B family. As to quaternary structure, interacts with RseA; the third transmembrane domain can be cross-linked to the transmembrane domain of RseA. Zn(2+) serves as cofactor.

It localises to the cell inner membrane. Inhibited by Zn(2+) chelator 1,10-phenanthroline. Its function is as follows. A site-2 regulated intramembrane protease (S2P) that cleaves the peptide bond between 'Ala-108' and 'Cys-109' in the transmembrane region of RseA. Part of a regulated intramembrane proteolysis (RIP) cascade. Acts on DegS-cleaved RseA to release the cytoplasmic domain of RseA, residue 'Val-148' of RseA may be required for this. This provides the cell with sigma-E (RpoE) activity through the proteolysis of RseA. Can also cleave sequences in transmembrane regions of other proteins (such as LacY) as well as liberated signal peptides of beta-lactamase, OmpF, LivK, SecM, PhoA, LivJ, OmpC, Lpp and TorA, probably within the membrane. Cleaves FecR within its transmembrane region to release an N-terminal cytoplasmic fragment which binds to sigma factor FecI, allowing it to activate transcription of the fecABCDE operon which mediates ferric citrate transport. The polypeptide is Regulator of sigma-E protease RseP (rseP) (Escherichia coli (strain K12)).